Reading from the N-terminus, the 770-residue chain is Penicillin-binding protein 1C (770 aa).

At 1 to 8 the chain is on the cytoplasmic side; that stretch reads MPRLLTKR. A helical; Signal-anchor for type II membrane protein membrane pass occupies residues 9-29; it reads GCWITLAAAPFLLFLAAWGAD. At 30-770 the chain is on the periplasmic side; sequence KLWPLPLHEV…QIATVKFVMQ (741 aa). Residues 43 to 213 form a transglycosylase region; that stretch reads RVVVAQDGTP…SRLRPDRWPE (171 aa). The Proton donor; for transglycosylase activity role is filled by Glu84. A transpeptidase region spans residues 278 to 559; sequence AGLQRRLEEL…FASAVPLLNQ (282 aa). The active-site Acyl-ester intermediate; for transpeptidase activity is Ser342.

The protein in the N-terminal section; belongs to the glycosyltransferase 51 family. It in the C-terminal section; belongs to the transpeptidase family.

It localises to the cell inner membrane. It carries out the reaction [GlcNAc-(1-&gt;4)-Mur2Ac(oyl-L-Ala-gamma-D-Glu-L-Lys-D-Ala-D-Ala)](n)-di-trans,octa-cis-undecaprenyl diphosphate + beta-D-GlcNAc-(1-&gt;4)-Mur2Ac(oyl-L-Ala-gamma-D-Glu-L-Lys-D-Ala-D-Ala)-di-trans,octa-cis-undecaprenyl diphosphate = [GlcNAc-(1-&gt;4)-Mur2Ac(oyl-L-Ala-gamma-D-Glu-L-Lys-D-Ala-D-Ala)](n+1)-di-trans,octa-cis-undecaprenyl diphosphate + di-trans,octa-cis-undecaprenyl diphosphate + H(+). It functions in the pathway cell wall biogenesis; peptidoglycan biosynthesis. Its activity is regulated as follows. Transglycosylase activity can be inhibited by moenomycin. In terms of biological role, cell wall formation. The enzyme has a penicillin-insensitive transglycosylase N-terminal domain (formation of linear glycan strands) and a transpeptidase C-terminal domain which may not be functional. The polypeptide is Penicillin-binding protein 1C (pbpC) (Escherichia coli (strain K12)).